The sequence spans 656 residues: DNA ligase (656 aa).

Residues 32–36 (DAVYD) and 81–82 (SL) contribute to the NAD(+) site. Residue K112 is the N6-AMP-lysine intermediate of the active site. NAD(+) is bound by residues R133, E167, and K306. The Zn(2+) site is built by C400, C403, C416, and C421. Positions 577–656 (KSSSVFSDKT…ELLKRLKELD (80 aa)) constitute a BRCT domain.

Belongs to the NAD-dependent DNA ligase family. LigA subfamily. Mg(2+) is required as a cofactor. The cofactor is Mn(2+).

The catalysed reaction is NAD(+) + (deoxyribonucleotide)n-3'-hydroxyl + 5'-phospho-(deoxyribonucleotide)m = (deoxyribonucleotide)n+m + AMP + beta-nicotinamide D-nucleotide.. Functionally, DNA ligase that catalyzes the formation of phosphodiester linkages between 5'-phosphoryl and 3'-hydroxyl groups in double-stranded DNA using NAD as a coenzyme and as the energy source for the reaction. It is essential for DNA replication and repair of damaged DNA. The chain is DNA ligase from Helicobacter pylori (strain J99 / ATCC 700824) (Campylobacter pylori J99).